The following is a 324-amino-acid chain: uncharacterized protein (324 aa).

The 58-residue stretch at 6-63 (LKYRELKIISVIAASENISHAATVLGIAQANVSKYLADFESKVGLKVFDRTTRQLMLT) folds into the HTH lysR-type domain. Residues 23–42 (ISHAATVLGIAQANVSKYLA) constitute a DNA-binding region (H-T-H motif).

It belongs to the LysR transcriptional regulatory family.

This is an uncharacterized protein from Escherichia coli (strain K12).